The chain runs to 112 residues: UstYa family oxidase VicYb (112 aa).

2 short sequence motifs (HXXHC) span residues 9-13 (HYLHC) and 36-40 (HLDHC).

The protein belongs to the ustYa family.

The protein operates within mycotoxin biosynthesis. In terms of biological role, ustYa family oxidase, part of the gene cluster that mediates the biosynthesis of the secondary metabolite victorin, the molecular basis for Victoria blight of oats. Within the pathway, vicYb catalyzes the oxidative cyclization of the core peptide. The pathway starts with the processing of the precursor vicA1 by several endopeptidases including kexin proteases as well as the cluster-specific S28 family peptidases vicPa and vicPb to produce 7 identical copies of the hexapeptide Gly-Leu-Lys-Leu-Ala-Phe. After being excised from the precursor peptide, the core peptides are cyclized and modified post-translationally by enzymes encoded within the gene cluster. The ustYa family oxidase vicYb is required for the formation of the macrocycle in victorin and the copper amine oxidases (CAOs) vicK1 and vicK2 are responsible for converting victorin to the active form by oxidizing the N-terminal glycyl residue in the peptides to glyoxylate. Relaxed substrate specificity of enzymes in the victorin biosynthetic pathway results in a metabolic grid that produces a set of analogs including victorinines B, C, E or HV-toxin M. The sequence is that of UstYa family oxidase VicYb from Bipolaris victoriae (strain FI3) (Victoria blight of oats agent).